The sequence spans 124 residues: Fluoride-specific ion channel FluC 2 (124 aa).

4 consecutive transmembrane segments (helical) span residues 1–21, 34–54, 66–86, and 103–123; these read MSDI…RFQI, FLIL…LSLV, LILF…SFVY, and LFII…FLGT. Na(+) contacts are provided by G76 and S79.

The protein belongs to the fluoride channel Fluc/FEX (TC 1.A.43) family.

It is found in the cell inner membrane. The catalysed reaction is fluoride(in) = fluoride(out). With respect to regulation, na(+) is not transported, but it plays an essential structural role and its presence is essential for fluoride channel function. Functionally, fluoride-specific ion channel. Important for reducing fluoride concentration in the cell, thus reducing its toxicity. The protein is Fluoride-specific ion channel FluC 2 of Prochlorococcus marinus (strain NATL2A).